Consider the following 379-residue polypeptide: uncharacterized protein (379 aa).

The protein belongs to the glycosyltransferase 28 family.

This is an uncharacterized protein from Methanosarcina acetivorans (strain ATCC 35395 / DSM 2834 / JCM 12185 / C2A).